Here is a 768-residue protein sequence, read N- to C-terminus: C-type polyheme cytochrome OmcC (768 aa).

A signal peptide spans 1–23 (MSRKVTKYSAVLAVSLFAAALAG). C24 carries the N-palmitoyl cysteine lipid modification. Residue C24 is the site of S-diacylglycerol cysteine attachment. Heme c-binding residues include C48, C51, H52, C80, C83, H84, C112, C115, H116, C148, C151, H152, C193, C196, H197, C238, C241, H242, C320, C323, H324, C405, C408, H409, C454, C457, H458, C504, C507, H508, C579, C582, H583, C611, C614, and H615.

Post-translationally, binds 12 heme c groups per subunit.

It is found in the cell outer membrane. Functionally, not involved in Fe(3+) reduction. The sequence is that of C-type polyheme cytochrome OmcC (omcC) from Geobacter sulfurreducens (strain ATCC 51573 / DSM 12127 / PCA).